The primary structure comprises 185 residues: Elongation factor P 1 (185 aa).

The protein belongs to the elongation factor P family.

The protein localises to the cytoplasm. The protein operates within protein biosynthesis; polypeptide chain elongation. In terms of biological role, involved in peptide bond synthesis. Stimulates efficient translation and peptide-bond synthesis on native or reconstituted 70S ribosomes in vitro. Probably functions indirectly by altering the affinity of the ribosome for aminoacyl-tRNA, thus increasing their reactivity as acceptors for peptidyl transferase. The sequence is that of Elongation factor P 1 (efp1) from Chlamydia trachomatis serovar D (strain ATCC VR-885 / DSM 19411 / UW-3/Cx).